The sequence spans 418 residues: 3-phosphoshikimate 1-carboxyvinyltransferase (418 aa).

Lysine 26, serine 27, and arginine 31 together coordinate 3-phosphoshikimate. Position 26 (lysine 26) interacts with phosphoenolpyruvate. Phosphoenolpyruvate-binding residues include glycine 97 and arginine 125. 3-phosphoshikimate is bound by residues serine 170, serine 171, glutamine 172, aspartate 297, asparagine 320, and lysine 324. Glutamine 172 serves as a coordination point for phosphoenolpyruvate. The active-site Proton acceptor is the aspartate 297. Residues arginine 328, arginine 375, and lysine 400 each coordinate phosphoenolpyruvate.

It belongs to the EPSP synthase family. In terms of assembly, monomer.

The protein localises to the cytoplasm. It catalyses the reaction 3-phosphoshikimate + phosphoenolpyruvate = 5-O-(1-carboxyvinyl)-3-phosphoshikimate + phosphate. Its pathway is metabolic intermediate biosynthesis; chorismate biosynthesis; chorismate from D-erythrose 4-phosphate and phosphoenolpyruvate: step 6/7. In terms of biological role, catalyzes the transfer of the enolpyruvyl moiety of phosphoenolpyruvate (PEP) to the 5-hydroxyl of shikimate-3-phosphate (S3P) to produce enolpyruvyl shikimate-3-phosphate and inorganic phosphate. In Pseudomonas syringae pv. syringae (strain B728a), this protein is 3-phosphoshikimate 1-carboxyvinyltransferase.